Here is a 125-residue protein sequence, read N- to C-terminus: Large ribosomal subunit protein bL17 (125 aa).

The protein belongs to the bacterial ribosomal protein bL17 family. As to quaternary structure, part of the 50S ribosomal subunit. Contacts protein L32.

The polypeptide is Large ribosomal subunit protein bL17 (Blochmanniella pennsylvanica (strain BPEN)).